We begin with the raw amino-acid sequence, 1077 residues long: Zinc finger protein 518B (1077 aa).

Positions 9–30 (YTTQVNGGPSSLTMSPKQPNRA) are enriched in polar residues. The segment at 9 to 35 (YTTQVNGGPSSLTMSPKQPNRATRTER) is disordered. 2 C2H2-type zinc fingers span residues 160-182 (FICS…LVKH) and 188-211 (YRCE…RRVH). The tract at residues 372–397 (TSRGDGGTSECLSTEKGSGGQKKMLS) is disordered. K479 participates in a covalent cross-link: Glycyl lysine isopeptide (Lys-Gly) (interchain with G-Cter in SUMO2). 4 disordered regions span residues 561 to 585 (LVSS…GQVS), 599 to 622 (GEDK…ETAG), 675 to 739 (KPSS…GSRQ), and 825 to 852 (QPLT…RKED). Residues 564–574 (SDRKLEDKQME) are compositionally biased toward basic and acidic residues. Polar residues-rich tracts occupy residues 605-621 (SQQP…SETA) and 675-688 (KPSS…QRRS). Residues K847 and K861 each participate in a glycyl lysine isopeptide (Lys-Gly) (interchain with G-Cter in SUMO2) cross-link. The interval 895-914 (QVNSTKKKNKMQANPGRYFK) is disordered. A C2H2-type 3 zinc finger spans residues 1039-1061 (FKCWFCGRLYEDQEEWMSHGQRH).

Belongs to the krueppel C2H2-type zinc-finger protein family.

It localises to the nucleus. Functionally, through its association with the EHMT1-EHMT2/G9A and PRC2/EED-EZH2 histone methyltransferase complexes may function in gene silencing, regulating repressive post-translational methylation of histone tails at promoters of target genes. This chain is Zinc finger protein 518B (Znf518b), found in Mus musculus (Mouse).